The chain runs to 430 residues: Adenylosuccinate synthetase (430 aa).

GTP is bound by residues 12-18 and 40-42; these read GDEGKGK and GHT. Catalysis depends on Asp-13, which acts as the Proton acceptor. Asp-13 and Gly-40 together coordinate Mg(2+). IMP-binding positions include 13–16, 38–41, Thr-128, Arg-142, Gln-223, Thr-238, and Arg-302; these read DEGK and NAGH. His-41 (proton donor) is an active-site residue. 298-304 is a substrate binding site; it reads TTTGRPR. GTP-binding positions include Arg-304, 330–332, and 412–414; these read SID and SVG.

This sequence belongs to the adenylosuccinate synthetase family. As to quaternary structure, homodimer. Mg(2+) is required as a cofactor.

The protein localises to the cytoplasm. It catalyses the reaction IMP + L-aspartate + GTP = N(6)-(1,2-dicarboxyethyl)-AMP + GDP + phosphate + 2 H(+). Its pathway is purine metabolism; AMP biosynthesis via de novo pathway; AMP from IMP: step 1/2. Its function is as follows. Plays an important role in the de novo pathway of purine nucleotide biosynthesis. Catalyzes the first committed step in the biosynthesis of AMP from IMP. This chain is Adenylosuccinate synthetase, found in Streptococcus gordonii (strain Challis / ATCC 35105 / BCRC 15272 / CH1 / DL1 / V288).